Consider the following 85-residue polypeptide: Large ribosomal subunit protein bL27 (85 aa).

A disordered region spans residues 1 to 20 (MAHKKAGGSTRNGRDSEAKR).

This sequence belongs to the bacterial ribosomal protein bL27 family.

This chain is Large ribosomal subunit protein bL27, found in Cronobacter sakazakii (strain ATCC BAA-894) (Enterobacter sakazakii).